A 276-amino-acid polypeptide reads, in one-letter code: RRP15-like protein (276 aa).

Disordered stretches follow at residues 1 to 132 (MALL…QLRV) and 201 to 276 (KRAK…DGEE). Basic and acidic residues-rich tracts occupy residues 75–95 (FQKDAANKKPGFDFEIEKADV) and 226–245 (KGSSGKKKSEWSVLREDFMT). Residues 254–276 (EEDDDEEGHNDEADDSDYDDGEE) are compositionally biased toward acidic residues. Phosphoserine is present on Ser269. Position 271 is a phosphotyrosine (Tyr271).

Belongs to the RRP15 family.

This Drosophila melanogaster (Fruit fly) protein is RRP15-like protein.